Consider the following 91-residue polypeptide: Putative methyltransferase YfdM (91 aa).

The polypeptide is Putative methyltransferase YfdM (yfdM) (Escherichia coli (strain K12)).